The sequence spans 180 residues: Large ribosomal subunit protein uL6 (180 aa).

This sequence belongs to the universal ribosomal protein uL6 family. In terms of assembly, part of the 50S ribosomal subunit.

This protein binds to the 23S rRNA, and is important in its secondary structure. It is located near the subunit interface in the base of the L7/L12 stalk, and near the tRNA binding site of the peptidyltransferase center. This is Large ribosomal subunit protein uL6 from Lachnoclostridium phytofermentans (strain ATCC 700394 / DSM 18823 / ISDg) (Clostridium phytofermentans).